A 495-amino-acid polypeptide reads, in one-letter code: Ectonucleoside triphosphate diphosphohydrolase 2 (495 aa).

Residues M1–S7 are Cytoplasmic-facing. The helical transmembrane segment at L8–P28 threads the bilayer. Residues T29–S462 lie on the Extracellular side of the membrane. N-linked (GlcNAc...) asparagine glycosylation occurs at N64. Cysteines 75 and 99 form a disulfide. The N-linked (GlcNAc...) asparagine glycan is linked to N129. The active-site Proton acceptor is the E165. G204–Q208 contributes to the ATP binding site. 4 disulfides stabilise this stretch: C242–C284, C265–C310, C323–C328, and C377–C399. Residue N294 is glycosylated (N-linked (GlcNAc...) asparagine). N-linked (GlcNAc...) asparagine glycosylation is found at N378 and N443. A helical transmembrane segment spans residues S463–L483. Residues R484 to I495 lie on the Cytoplasmic side of the membrane.

It belongs to the GDA1/CD39 NTPase family. Ca(2+) serves as cofactor. The cofactor is Mg(2+). As to expression, brain, placenta, skeletal muscle, kidney, pancreas, heart, ovary, testis, colon, small intestine, prostate and pancreas. No expression in adult thymus, spleen, lung, liver and peripheral blood leukocytes.

It localises to the cell membrane. It is found in the endoplasmic reticulum membrane. In terms of biological role, in the nervous system, could hydrolyze ATP and other nucleotides to regulate purinergic neurotransmission. Hydrolyzes ADP only to a marginal extent. The order of activity with different substrates is ATP &gt; GTP &gt; CTP = ITP &gt; UTP &gt;&gt; ADP = UDP. The polypeptide is Ectonucleoside triphosphate diphosphohydrolase 2 (ENTPD2) (Homo sapiens (Human)).